The following is a 489-amino-acid chain: NAC domain-containing protein 74 (489 aa).

An NAC domain is found at Leu-9–Arg-159. Residues Ile-108 to Gly-165 mediate DNA binding. The segment covering Lys-413 to Ala-427 has biased composition (basic and acidic residues). The disordered stretch occupies residues Lys-413–Ser-435. Residues Trp-456 to Gly-476 traverse the membrane as a helical segment.

In terms of tissue distribution, widely expressed.

The protein resides in the nucleus. Its subcellular location is the cell membrane. In terms of biological role, transcription activator involved in heat and endoplasmic reticulum (ER) stress responses. Regulates the expression of genes involved in ER protein folding and heat stress-responsive genes. Binds directly to the promoter of BZIP74 and regulates its expression in response to heat stress. In Oryza sativa subsp. japonica (Rice), this protein is NAC domain-containing protein 74.